Reading from the N-terminus, the 584-residue chain is J protein JJJ2 (584 aa).

Residues 13–77 form the J domain; sequence TYYSILGLTS…DQKLRYDRDL (65 aa). The tract at residues 216–312 is disordered; sequence YSEDPNSCLG…FSSGSHDSNL (97 aa). At serine 229 the chain carries Phosphoserine. A compositionally biased stretch (low complexity) spans 241–253; sequence QQQQQQQQQQQQQ. Residues 269 to 282 show a composition bias toward basic and acidic residues; sequence KDNKESKRESRVSP. Over residues 299-312 the composition is skewed to polar residues; the sequence is KTSTFSSGSHDSNL.

The protein localises to the cytoplasm. The protein resides in the nucleus. This Saccharomyces cerevisiae (strain YJM789) (Baker's yeast) protein is J protein JJJ2 (JJJ2).